Reading from the N-terminus, the 165-residue chain is Phosphopantetheine adenylyltransferase (165 aa).

Substrate is bound at residue Thr10. ATP contacts are provided by residues 10-11 and His18; that span reads TF. Residues Lys42, Leu75, and Arg89 each contribute to the substrate site. ATP-binding positions include 90–92, Glu100, and 125–131; these read GVR and VSFISSS.

It belongs to the bacterial CoaD family. As to quaternary structure, homohexamer. Mg(2+) is required as a cofactor.

The protein resides in the cytoplasm. It catalyses the reaction (R)-4'-phosphopantetheine + ATP + H(+) = 3'-dephospho-CoA + diphosphate. It functions in the pathway cofactor biosynthesis; coenzyme A biosynthesis; CoA from (R)-pantothenate: step 4/5. Its function is as follows. Reversibly transfers an adenylyl group from ATP to 4'-phosphopantetheine, yielding dephospho-CoA (dPCoA) and pyrophosphate. In Buchnera aphidicola subsp. Schizaphis graminum (strain Sg), this protein is Phosphopantetheine adenylyltransferase.